We begin with the raw amino-acid sequence, 97 residues long: UPF0390 protein CNBD1430 (97 aa).

Disordered regions lie at residues 1 to 57 (MAQG…INNS) and 75 to 97 (RNVG…GKSR). Residues 29-46 (GKREVAPKDRQRVLERSQ) show a composition bias toward basic and acidic residues. Positions 48–57 (KQLSSKINNS) are enriched in polar residues.

Belongs to the UPF0390 family.

The polypeptide is UPF0390 protein CNBD1430 (Cryptococcus neoformans var. neoformans serotype D (strain B-3501A) (Filobasidiella neoformans)).